Reading from the N-terminus, the 296-residue chain is Prostate androgen-regulated mucin-like protein 1 homolog (296 aa).

Positions 1 to 20 (MVCKVLIALCIFTAGLRVQG) are cleaved as a signal peptide. Topologically, residues 21 to 244 (SPTVPLPVSL…EVENALSSGS (224 aa)) are extracellular. 2 N-linked (GlcNAc...) asparagine glycosylation sites follow: Asn61 and Asn95. Residues 72–220 (LTSQLPTDHR…SPQDTEPGKV (149 aa)) form a disordered region. The segment covering 78–95 (TDHREEAVTSPPLKRDVN) has biased composition (basic and acidic residues). Residues 96 to 110 (STDSSPAGFPSTSSD) are compositionally biased toward polar residues. Positions 139 to 167 (LLSSQAPTSATTSPATSLSESLSASVTSS) are enriched in low complexity. Residues 168–177 (HNSTVANIQP) are compositionally biased toward polar residues. Asn169 is a glycosylation site (N-linked (GlcNAc...) asparagine). The span at 206-217 (VPKEKSPQDTEP) shows a compositional bias: basic and acidic residues. Residues 245-265 (IAAITVTVIAVVLLVFGGAAY) traverse the membrane as a helical segment. At 266–296 (LKIRHSSYGRLLDDHDYGSWGNYNNPLYDDS) the chain is on the cytoplasmic side. The residue at position 284 (Ser284) is a Phosphoserine.

This sequence belongs to the PARM family. In terms of processing, highly N-glycosylated and O-glycosylated.

It localises to the cell membrane. Its subcellular location is the golgi apparatus membrane. The protein resides in the endosome membrane. Its function is as follows. May regulate TLP1 expression and telomerase activity, thus enabling certain prostatic cells to resist apoptosis. The sequence is that of Prostate androgen-regulated mucin-like protein 1 homolog (Parm1) from Mus musculus (Mouse).